Reading from the N-terminus, the 2271-residue chain is MSKRQKAFHDSLANEKTRVRLYKSGKNWVKSGIKEIEMFKIMGLPFISHSLVSQDNQSISKKMTGYGLKTTAVIGGAFTVNMLHDQQAFAASDAPLTSELNTQSETVGNQNSTTIEASTSTADSTSVTKNSSSVQTSNSDTVSSEKSEKVTSTTNSTSNQQEKLTSTSESTSSKNTTSSSDTKSVASTSSTEQPINTSTNQSTASNNTSQSTTPSSVNLNKTSTTSTSTAPVKLRTFSRLAMSTFASAATTTAVTANTITVNKDNLKQYMTTSGNATYDQSTGIVTLTQDAYSQKGAITLGTRIDSNKSFHFSGKVNLGNKYEGHGNGGDGIGFAFSPGVLGETGLNGAAVGIGGLSNAFGFKLDTYHNTSKPNSAAKANADPSNVAGGGAFGAFVTTDSYGVATTYTSSSTADNAAKLNVQPTNNTFQDFDINYNGDTKVMTVKYAGQTWTRNISDWIAKSGTTNFSLSMTASTGGATNLQQVQFGTFEYTESAVTQVRYVDVTTGKDIIPPKTYSGNVDQVVTIDNQQSALTAKGYNYTSVDSSYASTYNDTNKTVKMTNAGQSVTYYFTDVKAPTVTVGNQTIEVGKTMNPIVLTTTDNGTGTVTNTVTGLPSGLSYDSATNSIIGTPTKIGQSTVTVVSTDQANNKSTTTFTINVVDTTAPTVTPIGDQSSEVYSPISPIKIATQDNSGNAVTNTVTGLPSGLTFDSTNNTISGTPTNIGTSTISIVSTDASGNKTTTTFKYEVTRNSMSDSVSTSGSTQQSQSVSTSKADSQSASTSTSGSIVVSTSASTSKSTSVSLSDSVSASKSLSTSESNSVSSSTSTSLVNSQSVSSSMSDSASKSTSLSDSISNSSSTEKSESLSTSTSDSLRTSTSLSDSLSMSTSGSLSKSQSLSTSISGSSSTSASLSDSTSNAISTSTSLSESASTSDSISISNSIANSQSASTSKSDSQSTSISLSTSDSKSMSTSESLSDSTSTSGSVSGSLSIAASQSVSTSTSDSMSTSEIVSDSISTSGSLSASDSKSMSVSSSMSTSQSGSTSESLSDSQSTSDSDSKSLSQSTSQSGSTSTSTSTSASVRTSESQSTSGSMSASQSDSMSISTSFSDSTSDSKSASTASSESISQSASTSTSGSVSTSTSLSTSNSERTSTSMSDSTSLSTSESDSISESTSTSDSISEAISASESTFISLSESNSTSDSESQSASAFLSESLSESTSESTSESVSSSTSESTSLSDSTSESGSTSTSLSNSTSGSTSISTSTSISESTSTFKSESVSTSLSMSTSTSLSDSTSLSTSLSDSTSDSKSDSLSTSMSTSDSISTSKSDSISTSTSLSGSTSESESDSTSSSESKSDSTSMSISMSQSTSGSTSTSTSTSLSDSTSTSLSLSASMNQSGVDSNSASQSASNSTSTSTSESDSQSTSSYTSQSTSQSESTSTSTSLSDSTSISKSTSQSGSVSTSASLSGSESESDSQSISTSASESTSESASTSLSDSTSTSNSGSASTSTSLNNSASASESDLSSTSLSDSTSASMQSSESDSQSTSASLSDSLSTSTSNRMSTIASLSTSVSTSESGSTSESTSESDSTSTSLSDSQSTSRSTSASGSASTSTSTSDSRSTSASTSTSMRTSTSDSQSMSLSTSTSTSMSDSTSLSDSVSDSTSDSTSASTSGSMSVSISLSDSTSTSTSASEVMSASISDSQSMSESVNDSESVSESNSESDSKSMSGSTSVSDSGSLSVSTSLRKSESVSESSSLSCSQSMSDSVSTSDSSSLSVSTSLRSSESVSESDSLSDSKSTSGSTSTSTSGSLSTSTSLSGSESVSESTSLSDSISMSDSTSTSDSDSLSGSISLSGSTSLSTSDSLSDSKSLSSSQSMSGSESTSTSVSDSQSSSTSNSQFDSMSISASESDSMSTSDSSSISGSNSTSTSLSTSDSMSGSVSVSTSTSLSDSISGSTSVSDSSSTSTSTSLSDSMSQSQSTSTSASGSLSTSISTSMSMSASTSSSQSTSVSTSLSTSDSISDSTSISISGSQSTVESESTSDSTSISDSESLSTSDSDSTSTSTSDSTSGSTSTSISESLSTSGSGSTSVSDSTSMSESNSSSVSMSQDKSDSTSISDSESVSTSTSTSLSTSDSTSTSESLSTSMSGSQSISDSTSTSMSGSTSTSESNSMHPSDSMSMHHTHSTSTSRLSSEATTSTSESQSTLSATSEVTKHNGTPAQSEKRLPDTGDSIKQNGLLGGVMTLLVGLGLMKRKKKKDENDQDDSQA.

An N-terminal signal peptide occupies residues Met-1–Phe-89. Positions Ala-90–Ala-230 are serine-rich repeat region 1, SRR1. Positions Leu-100–Asn-111 are enriched in polar residues. The interval Leu-100 to Thr-229 is disordered. Low complexity predominate over residues Ser-112 to Thr-128. Positions Lys-129 to Asp-140 are enriched in polar residues. Over residues Val-150–Thr-229 the composition is skewed to low complexity. The interval Pro-231–Asn-751 is non-repeat region (NRR). The tract at residues Phe-245–Tyr-491 is L-lectin module. Ca(2+) contacts are provided by Asp-365, Tyr-367, Asn-369, and Asp-382. The interval Thr-492 to Phe-571 is beta-grasp module. The interval Thr-572–Val-659 is cadherin-like module-1. Positions 573, 575, 601, 602, 645, 661, 663, 690, 691, and 734 each coordinate Ca(2+). The segment at Val-660–Asn-751 is cadherin-like module-2. Disordered regions lie at residues Asn-751–Thr-791 and Ser-806–Leu-2242. Low complexity-rich tracts occupy residues Ser-752 to Thr-791, Ser-806 to Ser-1392, and Ser-1402 to Glu-2214. Residues Ser-752 to Thr-2232 are serine-rich repeat region 2, SRR2. Positions Leu-2229–Gly-2233 match the LPXTG sorting signal motif. Position 2232 is a pentaglycyl murein peptidoglycan amidated threonine (Thr-2232). Positions Gly-2233–Ala-2271 are cleaved as a propeptide — removed by sortase.

The protein belongs to the serine-rich repeat protein (SRRP) family. In terms of processing, proteolytically cleaved by a metalloprotease. Glycosylated. It is probable that most of the Ser residues in SSR1 and SSR2 are O-GlcNAcylated. Sequential glycosylation by sugar transferases are able to generate complex sugar polymorphisms.

It localises to the secreted. The protein localises to the cell wall. In terms of biological role, mediates binding to human platelets, possibly through a receptor-ligand interaction. Probably associated with virulence in endovascular infection. Plays a positive role in biofilm formation, possibly by self-association via the non-repeat region (NRR or binding region, BR). Binds to and plays a role in human lung epithelial cell invasion via the L-lectin module of its NRR domain; N-acetylneuraminic acid (Neu5Ac) inhibits binding. Treatment of host cells with neuraminidase decreases adherence of S.aureus cells, suggesting SraP recognizes a host terminal Neu5Ac moiety as a receptor. This chain is Serine-rich adhesin for platelets, found in Staphylococcus aureus (strain NCTC 8325 / PS 47).